The sequence spans 219 residues: Casparian strip membrane protein 3 (219 aa).

Residues 1 to 43 (MDPGREDEVPLAATSPESRRTRSNGRGKATVGDAPPPAETVVS) are disordered. At 1-57 (MDPGREDEVPLAATSPESRRTRSNGRGKATVGDAPPPAETVVSTKAAPLPTGGWKKG) the chain is on the cytoplasmic side. Residues 58–78 (IAILDFILRLGAIGAAMGASI) form a helical membrane-spanning segment. At 79–108 (LMGTNEQILPFFTQFLQFHAQWDDFPVFKL) the chain is on the extracellular side. A helical membrane pass occupies residues 109–129 (FVVLNALAGGFLILSLPLSIV). Topologically, residues 130 to 147 (CIVRPLAVGPRFLLLITD) are cytoplasmic. The chain crosses the membrane as a helical span at residues 148 to 168 (LVNMATVIAAASAAAAIVYVA). At 169 to 193 (HNGSQDANWIAICQQFTDFCQGTSE) the chain is on the extracellular side. The N-linked (GlcNAc...) asparagine glycan is linked to Asn170. A helical membrane pass occupies residues 194 to 214 (AVVVSFVAAVFLVCLIVVSTL). Residues 215–219 (ALKRT) lie on the Cytoplasmic side of the membrane.

This sequence belongs to the Casparian strip membrane proteins (CASP) family. In terms of assembly, homodimer and heterodimers.

It localises to the cell membrane. In terms of biological role, regulates membrane-cell wall junctions and localized cell wall deposition. Required for establishment of the Casparian strip membrane domain (CSD) and the subsequent formation of Casparian strips, a cell wall modification of the root endodermis that determines an apoplastic barrier between the intraorganismal apoplasm and the extraorganismal apoplasm and prevents lateral diffusion. This Lotus japonicus (Lotus corniculatus var. japonicus) protein is Casparian strip membrane protein 3.